A 356-amino-acid chain; its full sequence is Pyrimidine monooxygenase RutA (356 aa).

Residues 49 to 50, Asn-115, Glu-124, 140 to 141, and Ser-190 each bind FMN; these read IK and RY.

The protein belongs to the NtaA/SnaA/DszA monooxygenase family. RutA subfamily.

It catalyses the reaction uracil + FMNH2 + NADH + O2 = (Z)-3-ureidoacrylate + FMN + NAD(+) + H2O + H(+). The catalysed reaction is thymine + FMNH2 + NADH + O2 = (Z)-2-methylureidoacrylate + FMN + NAD(+) + H2O + H(+). Functionally, catalyzes the pyrimidine ring opening between N-3 and C-4 by an unusual flavin hydroperoxide-catalyzed mechanism, adding oxygen atoms in the process to yield ureidoacrylate peracid, that immediately reacts with FMN forming ureidoacrylate and FMN-N(5)-oxide. The FMN-N(5)-oxide reacts spontaneously with NADH to produce FMN. Requires the flavin reductase RutF to regenerate FMN in vivo. The chain is Pyrimidine monooxygenase RutA from Haliangium ochraceum (strain DSM 14365 / JCM 11303 / SMP-2).